The following is a 449-amino-acid chain: Elongation factor 1-alpha (449 aa).

The tr-type G domain maps to 5–230 (KVHMNLVVVG…DMLEPPVRPS (226 aa)). The interval 14–21 (GHVDAGKS) is G1. 14–21 (GHVDAGKS) lines the GTP pocket. The tract at residues 70–74 (GITID) is G2. The interval 91–94 (DAPG) is G3. GTP is bound by residues 91-95 (DAPGH) and 153-156 (NKMD). A G4 region spans residues 153 to 156 (NKMD). Residues 194–196 (SGW) form a G5 region. Glutamate 362 carries the 5-glutamyl glycerylphosphorylethanolamine modification.

It belongs to the TRAFAC class translation factor GTPase superfamily. Classic translation factor GTPase family. EF-Tu/EF-1A subfamily. In terms of processing, phosphatidylethanolamine (PE) is a direct precursor of the ethanolamine-phosphoglycerol (EPG) moiety.

It localises to the cytoplasm. In terms of biological role, this protein promotes the GTP-dependent binding of aminoacyl-tRNA to the A-site of ribosomes during protein biosynthesis. In Trypanosoma brucei brucei, this protein is Elongation factor 1-alpha (TEF1).